Here is a 151-residue protein sequence, read N- to C-terminus: Endoribonuclease YbeY (151 aa).

His117, His121, and His127 together coordinate Zn(2+).

The protein belongs to the endoribonuclease YbeY family. Zn(2+) serves as cofactor.

It localises to the cytoplasm. Functionally, single strand-specific metallo-endoribonuclease involved in late-stage 70S ribosome quality control and in maturation of the 3' terminus of the 16S rRNA. This Alkaliphilus oremlandii (strain OhILAs) (Clostridium oremlandii (strain OhILAs)) protein is Endoribonuclease YbeY.